The following is a 457-amino-acid chain: MSKRYAVVLAAGQGTRMKSKLYKVLHPVCGKPMVEHVVDQISTLDVDKVVTIVGHGAEKVQEHLAGKSEFVKQEEQLGTAHAVLQAKPELAGKDGVTLVVCGDTPLIEASTMEALLKYHHEKRAKATILTTVIEDPTGYGRIIRDDLGIVEKIVEHKDATEKEQRISEINTGTYCFDNKALFEALENVSNDNVQGEYYLPDVIKILKDLDEVVAAYRMESFEESLGVNDRIALAEASKLMQRRINDNHMRNGVTLVNPENTYIDIDVKIGQDTVIEPGVMLRGNTVIGDDCVISSGSEIANSVIGERVHVRNSSIFESKVGDDVQIGPYAHLRPESDIHNHVKIGNYVETKKAIVGEGTKLPHFIYMGDAEIGKNVNVGCGSIAVNYDGKNKAKTIIGDDVFVGCNSNLIAPVKVGDRAFIAAGSTITKDVPEDALGIARAKQENKMDYAKRLNHGK.

The pyrophosphorylase stretch occupies residues 1–230 (MSKRYAVVLA…FEESLGVNDR (230 aa)). Residues 9 to 12 (LAAG), Lys-23, Gln-73, and 78 to 79 (GT) contribute to the UDP-N-acetyl-alpha-D-glucosamine site. Residue Asp-103 participates in Mg(2+) binding. 4 residues coordinate UDP-N-acetyl-alpha-D-glucosamine: Gly-140, Glu-155, Asn-170, and Asn-228. A Mg(2+)-binding site is contributed by Asn-228. The linker stretch occupies residues 231–251 (IALAEASKLMQRRINDNHMRN). Residues 252-457 (GVTLVNPENT…DYAKRLNHGK (206 aa)) are N-acetyltransferase. UDP-N-acetyl-alpha-D-glucosamine contacts are provided by Arg-333 and Lys-351. The active-site Proton acceptor is His-363. Residues Tyr-366 and Asn-377 each coordinate UDP-N-acetyl-alpha-D-glucosamine. Acetyl-CoA is bound by residues 386–387 (NY), Ala-423, and Arg-440.

In the N-terminal section; belongs to the N-acetylglucosamine-1-phosphate uridyltransferase family. The protein in the C-terminal section; belongs to the transferase hexapeptide repeat family. In terms of assembly, homotrimer. The cofactor is Mg(2+).

The protein resides in the cytoplasm. The catalysed reaction is alpha-D-glucosamine 1-phosphate + acetyl-CoA = N-acetyl-alpha-D-glucosamine 1-phosphate + CoA + H(+). The enzyme catalyses N-acetyl-alpha-D-glucosamine 1-phosphate + UTP + H(+) = UDP-N-acetyl-alpha-D-glucosamine + diphosphate. Its pathway is nucleotide-sugar biosynthesis; UDP-N-acetyl-alpha-D-glucosamine biosynthesis; N-acetyl-alpha-D-glucosamine 1-phosphate from alpha-D-glucosamine 6-phosphate (route II): step 2/2. It participates in nucleotide-sugar biosynthesis; UDP-N-acetyl-alpha-D-glucosamine biosynthesis; UDP-N-acetyl-alpha-D-glucosamine from N-acetyl-alpha-D-glucosamine 1-phosphate: step 1/1. The protein operates within bacterial outer membrane biogenesis; LPS lipid A biosynthesis. Functionally, catalyzes the last two sequential reactions in the de novo biosynthetic pathway for UDP-N-acetylglucosamine (UDP-GlcNAc). The C-terminal domain catalyzes the transfer of acetyl group from acetyl coenzyme A to glucosamine-1-phosphate (GlcN-1-P) to produce N-acetylglucosamine-1-phosphate (GlcNAc-1-P), which is converted into UDP-GlcNAc by the transfer of uridine 5-monophosphate (from uridine 5-triphosphate), a reaction catalyzed by the N-terminal domain. The polypeptide is Bifunctional protein GlmU (Listeria welshimeri serovar 6b (strain ATCC 35897 / DSM 20650 / CCUG 15529 / CIP 8149 / NCTC 11857 / SLCC 5334 / V8)).